The sequence spans 390 residues: Pre-mycofactocin synthase (390 aa).

In terms of domain architecture, FMN hydroxy acid dehydrogenase spans 1–383 (MADEWFETVA…RSDDILIPAD (383 aa)). Residues Ser108, Gln128, Thr156, and Lys254 each contribute to the FMN site. His278 serves as the catalytic Proton acceptor. Residues 309-313 (DGGIR) and 332-333 (GR) contribute to the FMN site.

This sequence belongs to the FMN-dependent alpha-hydroxy acid dehydrogenase family. It depends on FMN as a cofactor.

The catalysed reaction is 3-amino-5-[(4-hydroxyphenyl)methyl]-4,4-dimethyl-2-pyrrolidin-2-one + O2 + H2O = pre-mycofactocin + H2O2 + NH4(+). Involved in the biosynthesis of the enzyme cofactor mycofactocin (MFT). Catalyzes the oxidative deamination of AHDP (3-amino-5-[(4-hydroxyphenyl)methyl]-4,4-dimethyl-2-pyrrolidin-2-one), forming an alpha-keto amide moiety on the resulting molecule, which is called pre-mycofactocin (PMFT). This reaction occurs via a 5-[(4-hydroxyphenyl)methyl]-3-imino-4,4-dimethylpyrrolidin-2-one intermediate, which converts to PMFT. The alpha-keto amide moiety is the redox-active center for the redox activity of mycofactocin. This Mycobacterium ulcerans (strain Agy99) protein is Pre-mycofactocin synthase.